Reading from the N-terminus, the 1902-residue chain is Plexin-B3 (1902 aa).

Positions 1–34 (MLTDFLQAPVMAPWSPFSLHLLLLFLLLLPLTRA) are cleaved as a signal peptide. The region spanning 35–461 (HRFSVPNASF…TAQQVDRILV (427 aa)) is the Sema domain. At 35 to 1245 (HRFSVPNASF…MISTFPVEAQ (1211 aa)) the chain is on the extracellular side. Residue N41 is glycosylated (N-linked (GlcNAc...) asparagine). 2 cysteine pairs are disulfide-bonded: C88–C97 and C122–C130. N-linked (GlcNAc...) asparagine glycosylation is present at N221. 3 disulfide bridges follow: C257/C360, C273/C305, and C323/C347. Residues 353–372 (DSPESYPCGDEHTPSPIAGR) are disordered. 2 N-linked (GlcNAc...) asparagine glycosylation sites follow: N416 and N469. The region spanning 463 to 515 (ACPQFPNCTTCLQARDPLCGWCILQGRCTRRAECGRAVQPNQWLWSYEDNHCL) is the PSI 1 domain. Intrachain disulfides connect C464–C481, C470–C514, C473–C490, C484–C496, and C551–C569. PSI domains are found at residues 609 to 671 (DCSA…EACP) and 776 to 822 (DCAM…QLCP). 5 N-linked (GlcNAc...) asparagine glycosylation sites follow: N791, N889, N946, N1090, and N1207. IPT/TIG domains are found at residues 824-913 (PSID…HFTY), 915-1001 (DPVL…FRYT), and 1003-1134 (NPQL…FLYQ). Residues 1246–1266 (VGLGMGAAMLIAAVLLLTLMY) form a helical membrane-spanning segment. At 1267-1902 (RHKSKQALRD…ALVEYKVTDL (636 aa)) the chain is on the cytoplasmic side.

The protein belongs to the plexin family. Binds MET and MST1R. Interacts with RIT2/RIN. Interacts (via cytoplasmic domain) with FSCN1 and RAC1. May form homodimers (via Sema domain). Interacts (via cytoplasmic domain) with ARHGDIA. Expressed in glioma cells (at protein level). Expressed in glioma cells and oligodendrocyte precursor cells.

It is found in the cell membrane. Receptor for SEMA5A that plays a role in axon guidance, invasive growth and cell migration. Stimulates neurite outgrowth and mediates Ca(2+)/Mg(2+)-dependent cell aggregation. In glioma cells, SEMA5A stimulation of PLXNB3 results in the disassembly of F-actin stress fibers, disruption of focal adhesions and cellular collapse as well as inhibition of cell migration and invasion through ARHGDIA-mediated inactivation of RAC1. In Rattus norvegicus (Rat), this protein is Plexin-B3 (Plxnb3).